A 122-amino-acid polypeptide reads, in one-letter code: Ribonuclease pancreatic (122 aa).

Residues glutamate 1–histidine 16 show a composition bias toward basic and acidic residues. Residues glutamate 1–serine 20 form a disordered region. Substrate is bound by residues lysine 6 and arginine 9. Histidine 11 functions as the Proton acceptor in the catalytic mechanism. 4 cysteine pairs are disulfide-bonded: cysteine 25–cysteine 83, cysteine 39–cysteine 94, cysteine 57–cysteine 109, and cysteine 64–cysteine 71. Substrate contacts are provided by residues lysine 40–threonine 44, lysine 65, and arginine 84. Histidine 117 serves as the catalytic Proton donor.

This sequence belongs to the pancreatic ribonuclease family. As to quaternary structure, monomer. Interacts with and forms tight 1:1 complexes with RNH1. Dimerization of two such complexes may occur. Interaction with RNH1 inhibits this protein. Post-translationally, not glycosylated although the sequence N-V-T, a recognition site for carbohydrate attachment, is present. Pancreas.

It is found in the secreted. It carries out the reaction an [RNA] containing cytidine + H2O = an [RNA]-3'-cytidine-3'-phosphate + a 5'-hydroxy-ribonucleotide-3'-[RNA].. The enzyme catalyses an [RNA] containing uridine + H2O = an [RNA]-3'-uridine-3'-phosphate + a 5'-hydroxy-ribonucleotide-3'-[RNA].. Its function is as follows. Endonuclease that catalyzes the cleavage of RNA on the 3' side of pyrimidine nucleotides. Acts on single-stranded and double-stranded RNA. The protein is Ribonuclease pancreatic (RNASE1) of Osphranter rufus (Red kangaroo).